A 332-amino-acid chain; its full sequence is Glycerol-3-phosphate dehydrogenase [NAD(P)+] (332 aa).

Residues Trp-11, Arg-30, and Lys-108 each coordinate NADPH. Positions 108, 137, and 139 each coordinate sn-glycerol 3-phosphate. Position 141 (Ala-141) interacts with NADPH. Sn-glycerol 3-phosphate is bound by residues Lys-192, Asp-245, Ser-255, Arg-256, and Asn-257. Lys-192 functions as the Proton acceptor in the catalytic mechanism. Arg-256 contacts NADPH. The NADPH site is built by Val-280 and Glu-282.

The protein belongs to the NAD-dependent glycerol-3-phosphate dehydrogenase family.

The protein resides in the cytoplasm. It carries out the reaction sn-glycerol 3-phosphate + NAD(+) = dihydroxyacetone phosphate + NADH + H(+). It catalyses the reaction sn-glycerol 3-phosphate + NADP(+) = dihydroxyacetone phosphate + NADPH + H(+). It participates in membrane lipid metabolism; glycerophospholipid metabolism. Its function is as follows. Catalyzes the reduction of the glycolytic intermediate dihydroxyacetone phosphate (DHAP) to sn-glycerol 3-phosphate (G3P), the key precursor for phospholipid synthesis. The chain is Glycerol-3-phosphate dehydrogenase [NAD(P)+] from Burkholderia pseudomallei (strain 1710b).